A 230-amino-acid polypeptide reads, in one-letter code: 2-phytyl-1,4-naphtoquinone methyltransferase (230 aa).

This sequence belongs to the class I-like SAM-binding methyltransferase superfamily. MenG/UbiE family.

It catalyses the reaction demethylphylloquinol + S-adenosyl-L-methionine = phylloquinol + S-adenosyl-L-homocysteine + H(+). Its pathway is cofactor biosynthesis; phylloquinone biosynthesis. Functionally, methyltransferase required for the conversion of 2-phytyl-1,4-beta-naphthoquinol to phylloquinol. This Nostoc punctiforme (strain ATCC 29133 / PCC 73102) protein is 2-phytyl-1,4-naphtoquinone methyltransferase.